A 556-amino-acid chain; its full sequence is Formate--tetrahydrofolate ligase (556 aa).

ATP is bound at residue 65-72 (TPAGEGKS).

This sequence belongs to the formate--tetrahydrofolate ligase family.

It carries out the reaction (6S)-5,6,7,8-tetrahydrofolate + formate + ATP = (6R)-10-formyltetrahydrofolate + ADP + phosphate. It participates in one-carbon metabolism; tetrahydrofolate interconversion. In Clostridium novyi (strain NT), this protein is Formate--tetrahydrofolate ligase.